The following is a 192-amino-acid chain: NF-kappa-B inhibitor-interacting Ras-like protein 1 (192 aa).

Residues 1–192 (MGKGCKVVVC…KSKGTPSNDI (192 aa)) are small GTPase-like. 11-18 (GMASVGKT) lines the GTP pocket. An Effector region motif is present at residues 35 to 43 (TSDTQEDIY). Residues 61–65 (DTRGL) and 120–123 (NKCE) contribute to the GTP site. The tract at residues 169-192 (TQPQSKSAFPLPGRKSKGTPSNDI) is disordered.

This sequence belongs to the small GTPase superfamily. Ras family. KappaB-Ras subfamily.

It is found in the cytoplasm. Its function is as follows. Atypical Ras-like protein that acts as a potent regulator of NF-kappa-B activity by preventing the degradation of NF-kappa-B inhibitor beta (NFKBIB) by most signals, explaining why NFKBIB is more resistant to degradation. The polypeptide is NF-kappa-B inhibitor-interacting Ras-like protein 1 (nkiras1) (Danio rerio (Zebrafish)).